We begin with the raw amino-acid sequence, 1140 residues long: Eukaryotic translation initiation factor 3 subunit A (1140 aa).

Residues 319-502 form the PCI domain; sequence LQRMAAHVLL…NSIYFGTDLT (184 aa). Basic and acidic residues-rich tracts occupy residues 589–624, 830–900, and 921–984; these read QNNAREEEEARRQEEESRKAKLAEQKRLEQEQEERE, AAEE…RGGD, and ERND…EPDS. Disordered regions lie at residues 589–632 and 830–1140; these read QNNA…QNEI and AAEE…VKRR. Positions 987 to 998 are enriched in low complexity; it reads AAGAKDAGGAPA. Composition is skewed to basic and acidic residues over residues 999 to 1050, 1058 to 1086, and 1109 to 1130; these read SRDD…EPQR, DAPRQSDRDNRRPGGERRDRDGRDVRGDQ, and PRDEKPAAKRDQPQDKENKGGD.

Belongs to the eIF-3 subunit A family. As to quaternary structure, component of the eukaryotic translation initiation factor 3 (eIF-3) complex. The eIF-3 complex interacts with pix.

It is found in the cytoplasm. RNA-binding component of the eukaryotic translation initiation factor 3 (eIF-3) complex, which is involved in protein synthesis of a specialized repertoire of mRNAs and, together with other initiation factors, stimulates binding of mRNA and methionyl-tRNAi to the 40S ribosome. The eIF-3 complex specifically targets and initiates translation of a subset of mRNAs involved in cell proliferation. The sequence is that of Eukaryotic translation initiation factor 3 subunit A from Drosophila ananassae (Fruit fly).